We begin with the raw amino-acid sequence, 412 residues long: uncharacterized protein (412 aa).

Residue histidine 49 coordinates Zn(2+). Residue glutamate 52 is the Proton acceptor of the active site. Residues histidine 53 and glutamate 129 each contribute to the Zn(2+) site.

The protein belongs to the peptidase M16 family. Zn(2+) serves as cofactor.

This is an uncharacterized protein from Rickettsia typhi (strain ATCC VR-144 / Wilmington).